Reading from the N-terminus, the 421-residue chain is Phosphatidylinositol 5-phosphate 4-kinase type-2 gamma (421 aa).

N-acetylalanine is present on A2. Residue S26 is modified to Phosphoserine. One can recognise a PIPK domain in the interval 43-420; that stretch reads AADPLVGVFL…RFLDFITNIF (378 aa). The required for interaction with PIP5K1A stretch occupies residues 69-75; that stretch reads VMLLPDD. Position 349 is a phosphoserine (S349).

As to quaternary structure, interacts with PIP5K1A; the interaction inhibits PIP5K1A kinase activity. In terms of processing, phosphorylated, phosphorylation is induced by EGF.

The protein resides in the endoplasmic reticulum. It is found in the cytoplasm. It carries out the reaction a 1,2-diacyl-sn-glycero-3-phospho-(1D-myo-inositol-5-phosphate) + ATP = a 1,2-diacyl-sn-glycero-3-phospho-(1D-myo-inositol-4,5-bisphosphate) + ADP + H(+). The catalysed reaction is 1,2-dihexadecanoyl-sn-glycero-3-phospho-(1D-myo-inositol-5-phosphate) + ATP = 1,2-dihexadecanoyl-sn-glycero-3-phospho-(1D-myo-inositol-4,5-bisphosphate) + ADP + H(+). It catalyses the reaction 1,2-dihexadecanoyl-sn-glycero-3-phospho-(1D-myo-inositol-5-phosphate) + GTP = 1,2-dihexadecanoyl-sn-glycero-3-phospho-(1D-myo-inositol-4,5-bisphosphate) + GDP + H(+). Its function is as follows. Phosphatidylinositol 5-phosphate 4-kinase with low enzymatic activity. May be a GTP sensor, has higher GTP-dependent kinase activity than ATP-dependent kinase activity. PIP4Ks negatively regulate insulin signaling through a catalytic-independent mechanism. They interact with PIP5Ks and suppress PIP5K-mediated PtdIns(4,5)P2 synthesis and insulin-dependent conversion to PtdIns(3,4,5)P3. This chain is Phosphatidylinositol 5-phosphate 4-kinase type-2 gamma, found in Homo sapiens (Human).